Consider the following 503-residue polypeptide: Probable cytosol aminopeptidase (503 aa).

Residues K274 and D279 each contribute to the Mn(2+) site. K286 is a catalytic residue. D297, D356, and E358 together coordinate Mn(2+). The active site involves R360.

Belongs to the peptidase M17 family. Mn(2+) is required as a cofactor.

The protein localises to the cytoplasm. The enzyme catalyses Release of an N-terminal amino acid, Xaa-|-Yaa-, in which Xaa is preferably Leu, but may be other amino acids including Pro although not Arg or Lys, and Yaa may be Pro. Amino acid amides and methyl esters are also readily hydrolyzed, but rates on arylamides are exceedingly low.. The catalysed reaction is Release of an N-terminal amino acid, preferentially leucine, but not glutamic or aspartic acids.. In terms of biological role, presumably involved in the processing and regular turnover of intracellular proteins. Catalyzes the removal of unsubstituted N-terminal amino acids from various peptides. The protein is Probable cytosol aminopeptidase of Burkholderia cenocepacia (strain ATCC BAA-245 / DSM 16553 / LMG 16656 / NCTC 13227 / J2315 / CF5610) (Burkholderia cepacia (strain J2315)).